Consider the following 376-residue polypeptide: Response regulator aspartate phosphatase H (376 aa).

6 TPR repeats span residues 99 to 132 (YYSL…LPFV), 139 to 172 (AEFH…YQNH), 180 to 213 (IQSL…AMDI), 220 to 253 (AISL…SREK), 259 to 292 (PKVL…ITAR), and 334 to 367 (EACA…QEDI).

This sequence belongs to the Rap family. Homodimer. Interacts with phosphorylated Spo0F. Each RapH protomer is bound to a monomer of Spo0F, forming a heterotetrameric complex. May also interact with non-phosphorylated Spo0F to inhibit the sporulation phosphorelay. Interacts with the C-terminal DNA-binding region of ComA. Does not interact with DegU.

It localises to the cytoplasm. With respect to regulation, both activities are inhibited by RapH. In terms of biological role, dual specificity regulatory protein that can control both sporulation and competence by acting on two distinct response regulators: Spo0F and ComA, respectively. Is involved in the temporal separation of competence and sporulation. Acts as a phosphatase that specifically dephosphorylates the sporulation initiation phosphotransferase Spo0F and inhibits its activity. RapH can also antagonize sporulation by sterically blocking phosphoryl transfer to and from Spo0F. In addition, inhibits the activity of ComA, a transcriptional factor that regulates the development of genetic competence. Acts by binding to ComA, leading to the inhibition of its DNA-binding activity. This is Response regulator aspartate phosphatase H (rapH) from Bacillus subtilis (strain 168).